Consider the following 358-residue polypeptide: S-adenosylmethionine:tRNA ribosyltransferase-isomerase (358 aa).

It belongs to the QueA family. As to quaternary structure, monomer.

It is found in the cytoplasm. The enzyme catalyses 7-aminomethyl-7-carbaguanosine(34) in tRNA + S-adenosyl-L-methionine = epoxyqueuosine(34) in tRNA + adenine + L-methionine + 2 H(+). Its pathway is tRNA modification; tRNA-queuosine biosynthesis. Functionally, transfers and isomerizes the ribose moiety from AdoMet to the 7-aminomethyl group of 7-deazaguanine (preQ1-tRNA) to give epoxyqueuosine (oQ-tRNA). The polypeptide is S-adenosylmethionine:tRNA ribosyltransferase-isomerase (Chelativorans sp. (strain BNC1)).